Reading from the N-terminus, the 180-residue chain is Protein C2-DOMAIN ABA-RELATED 10 (180 aa).

Residues 1–105 form the C2 domain; sequence MDQKPLGLLT…EALKMGMELL (105 aa). Residues arginine 22, aspartate 23, aspartate 28, aspartate 74, tryptophan 75, aspartate 76, and aspartate 82 each contribute to the Ca(2+) site.

Belongs to the plant CAR protein family. As to quaternary structure, binds to PYR/PYL/RCAR abscisic acid intracellular receptors in an ABA-independent manner, both at the plasma membrane and in the nucleus.

The protein resides in the cell membrane. It is found in the nucleus. Its function is as follows. Stimulates the GTPase/ATPase activities of Obg-like ATPases. Mediates the transient calcium-dependent interaction of PYR/PYL/RCAR abscisic acid (ABA) receptors with the plasma membrane and thus regulates ABA sensitivity. The chain is Protein C2-DOMAIN ABA-RELATED 10 from Arabidopsis thaliana (Mouse-ear cress).